The primary structure comprises 326 residues: MRTSSMMENQVSLSSIQRAVWDGKLPLQITLASSESRTYDQTDPYLIACPRISYLPSLLPRLRAFFSPSLIEPNSQPHEGWFSFEGVPLKWHLPVGLLYDLYAGADPASKGTRVDETDHPTSSLNDTLPWRLTVHFSDWPDEELVRLDADGMVMHDAFINSVKEADFLRNGTAKGIMTLSKEDSAGLWQAVQDVDLLSFQRISNILLPPPNQPFRNVPIRFFLPLSPDSGSPSLKVVQSPLPPNIPATTNTSQSTNLRHSPATQVQTLGSALHSLLPNLFPSRRTPVLAKPVLHGAAVPMSAPIEELVRSCAYGDGWVYIVIRMMG.

Lys163 is covalently cross-linked (Glycyl lysine isopeptide (Lys-Gly) (interchain with G-Cter in atg12)).

It belongs to the ATG5 family. In terms of assembly, conjugated with atg12. Post-translationally, conjugated to atg12; which is essential for autophagy.

It is found in the preautophagosomal structure membrane. Its function is as follows. Involved in cytoplasm to vacuole transport (Cvt) and autophagic vesicle formation. Autophagy is essential for maintenance of amino acid levels and protein synthesis under nitrogen starvation. Required for selective autophagic degradation of the nucleus (nucleophagy). Also required for mitophagy, which eliminates defective or superfluous mitochondria in order to fulfill cellular energy requirements and prevent excess ROS production. Conjugation with atg12, through a ubiquitin-like conjugating system involving atg7 as an E1-like activating enzyme and atg10 as an E2-like conjugating enzyme, is essential for its function. The atg12-atg5 conjugate acts as an E3-like enzyme which is required for lipidation of atg8 and atg8 association to the vesicle membranes. In Aspergillus fumigatus (strain ATCC MYA-4609 / CBS 101355 / FGSC A1100 / Af293) (Neosartorya fumigata), this protein is Autophagy protein 5 (atg5).